A 328-amino-acid chain; its full sequence is Embigin (328 aa).

An N-terminal signal peptide occupies residues 1–33 (MRSHTGLRALVAPGCSLLLLYLLAATRPDRAVG). Over 34–264 (DPADSAFTSL…VLSFMVPLKP (231 aa)) the chain is Extracellular. N55, N62, N75, N100, N117, N189, N196, N214, and N219 each carry an N-linked (GlcNAc...) asparagine glycan. Ig-like domains follow at residues 67-160 (EQTR…RVPK) and 159-254 (PKVH…IKLV). 2 disulfides stabilise this stretch: C88–C144 and C180–C238. A helical transmembrane segment spans residues 265–285 (FLAIIAEVILLVAIILLCEVY). The Cytoplasmic portion of the chain corresponds to 286 to 328 (TQKKKNDPDDGKEFEQIEQLKSDDSNGIENNVPRYRKTDSGDQ). Residues 289–309 (KKNDPDDGKEFEQIEQLKSDD) are compositionally biased toward basic and acidic residues. Positions 289-328 (KKNDPDDGKEFEQIEQLKSDDSNGIENNVPRYRKTDSGDQ) are disordered. At S310 the chain carries Phosphoserine.

Interacts with SLC16A1, SLC16A6 and SLC16A7. In terms of processing, N-glycosylated. As to expression, detected in prostate, mammary gland and erythrocytes (at protein level). Detected in testis, brain, prostate, heart, kidney, liver, mammary gland and lung.

It is found in the cell membrane. It localises to the synapse. In terms of biological role, plays a role in the outgrowth of motoneurons and in the formation of neuromuscular junctions. Following muscle denervation, promotes nerve terminal sprouting and the formation of additional acetylcholine receptor clusters at synaptic sites without affecting terminal Schwann cell number or morphology. Delays the retraction of terminal sprouts following re-innervation of denervated endplates. Plays a role in targeting the monocarboxylate transporters SLC16A1, SLC16A6 and SLC16A7 to the cell membrane. The polypeptide is Embigin (Emb) (Rattus norvegicus (Rat)).